Consider the following 406-residue polypeptide: F-box/WD repeat-containing protein mec-15 (406 aa).

The 48-residue stretch at 6–53 (PTELISLPSELLCHLFTYLPQRQLITEIPLVCRRFNTILNDDKFWSRR) folds into the F-box domain. 5 WD repeats span residues 101 to 142 (GHSA…NGED), 156 to 195 (AHSG…ALQN), 242 to 279 (LHKR…KPVL), 281 to 320 (EYSP…VLQT), and 365 to 406 (SHEL…DQEN).

In terms of assembly, may interact with the SCF ubiquitin ligase complex component skr-1. Expressed in several neurons in the head, tail and ventral cord, but absent in touch receptor neurons in adults. Expressed in GABAergic and cholinergic motor neurons.

The protein resides in the perikaryon. Its function is as follows. Plays a role in mechanosensory transduction (touch sensitivity), touch receptor neuron development and synapse formation. Regulates expression of the protein snb-1 and the distribution of synaptic vesicles at synapses to promote synaptic transmission at the neuromuscular junctions of GABAergic motor neurons. The polypeptide is F-box/WD repeat-containing protein mec-15 (Caenorhabditis elegans).